A 714-amino-acid chain; its full sequence is Penicillin-binding protein 1F (714 aa).

Residues 1–12 (MFKIKKKKLFIP) are Cytoplasmic-facing. Residues 13-33 (IIILVLTAFLALIGYISIIFL) traverse the membrane as a helical; Signal-anchor for type II membrane protein segment. Topologically, residues 34–714 (GHYVIDEKKL…DYVQPKLFSS (681 aa)) are extracellular. Positions 49–217 (SKIVDQNGDE…STYSPILHPD (169 aa)) are transglycosylase. E87 functions as the Proton donor; for transglycosylase activity in the catalytic mechanism. Positions 297–592 (SKLQKTAYQV…SSYPTRLFKD (296 aa)) are transpeptidase. The active-site Acyl-ester intermediate; for transpeptidase activity is S359.

This sequence in the N-terminal section; belongs to the glycosyltransferase 51 family. In the C-terminal section; belongs to the transpeptidase family.

It is found in the cell membrane. It catalyses the reaction [GlcNAc-(1-&gt;4)-Mur2Ac(oyl-L-Ala-gamma-D-Glu-L-Lys-D-Ala-D-Ala)](n)-di-trans,octa-cis-undecaprenyl diphosphate + beta-D-GlcNAc-(1-&gt;4)-Mur2Ac(oyl-L-Ala-gamma-D-Glu-L-Lys-D-Ala-D-Ala)-di-trans,octa-cis-undecaprenyl diphosphate = [GlcNAc-(1-&gt;4)-Mur2Ac(oyl-L-Ala-gamma-D-Glu-L-Lys-D-Ala-D-Ala)](n+1)-di-trans,octa-cis-undecaprenyl diphosphate + di-trans,octa-cis-undecaprenyl diphosphate + H(+). It carries out the reaction Preferential cleavage: (Ac)2-L-Lys-D-Ala-|-D-Ala. Also transpeptidation of peptidyl-alanyl moieties that are N-acyl substituents of D-alanine.. Its pathway is cell wall biogenesis; peptidoglycan biosynthesis. Its function is as follows. Cell wall formation. May be involved in outgrowth of the germinated spore or it could function in the synthesis of the germ cell wall. The chain is Penicillin-binding protein 1F (pbpF) from Bacillus subtilis (strain 168).